A 447-amino-acid polypeptide reads, in one-letter code: N-succinylarginine dihydrolase (447 aa).

Substrate contacts are provided by residues 19 to 28 (AGLSFGNEAS), asparagine 110, and 137 to 138 (HR). Glutamate 174 is a catalytic residue. Arginine 212 is a binding site for substrate. Histidine 248 is an active-site residue. Substrate is bound by residues aspartate 250 and asparagine 359. The active-site Nucleophile is cysteine 365.

Belongs to the succinylarginine dihydrolase family. As to quaternary structure, homodimer.

The enzyme catalyses N(2)-succinyl-L-arginine + 2 H2O + 2 H(+) = N(2)-succinyl-L-ornithine + 2 NH4(+) + CO2. It functions in the pathway amino-acid degradation; L-arginine degradation via AST pathway; L-glutamate and succinate from L-arginine: step 2/5. Catalyzes the hydrolysis of N(2)-succinylarginine into N(2)-succinylornithine, ammonia and CO(2). In Escherichia coli O6:H1 (strain CFT073 / ATCC 700928 / UPEC), this protein is N-succinylarginine dihydrolase.